A 1492-amino-acid chain; its full sequence is Putative leucine-rich repeat-containing protein DDB_G0290503 (1492 aa).

Residues 2 to 111 (SILLEGYLEK…WIEGIKDAIK (110 aa)) form the PH domain. LRR repeat units lie at residues 123–144 (LDGLIKTKDNDIIKLREKIKHL), 180–204 (IKSLTLQLSSKDESMKSLEKQVEKL), 258–284 (QESLNEIKDENNDLQSLIDTQKQQFEK), 329–351 (KNQFSTKLQLVNNEIQSLKSIVD), 352–375 (DKLKEIQLKDNQLTQLNQQHEIDN), 389–413 (ISKISNQLNEKDNKIQELSKQSIDK), 439–462 (LEKLNDINQLSNKLQDKENQILEI), 519–543 (INELQSNLNENQNKINELIENNQSS), 551–575 (LNQLSDKLQEKDEKLKSLESSIIER), 579–603 (IDQLQDNLNEKQDKINELVENNESS), 632–656 (INELQSNLNENQNKINELIENNQSS), 728–752 (LDELQSKLNEKQNEINQLIENNQSS), 806–830 (LKSLDSIIIENQEKLVQLTKSNQDS), 831–855 (LDELQSKLNEKQNEINELIENNQSS), 895–919 (INELQSKLNEKQNKINELVENNESS), 927–951 (LIQLSDQLQEKENQLKSFESSIIER), 955–979 (LNQLQSKLNEKQNEIDQITENNQSS), 1013–1036 (NEKLNEINEKDNKINELIQTNESL), 1044–1068 (FENLEQELEEKNNKILDLNSQIIDV), 1138–1164 (LQDLENELNLEKDTVNEKNDDINELKE), and 1210–1232 (NAHLKINEKDNEIHSLSKEGFNE). The interval 1272 to 1292 (RSSSSSLHQQQQMISPDLSNS) is disordered. Residues 1274–1286 (SSSSLHQQQQMIS) are compositionally biased toward low complexity. LRR repeat units follow at residues 1424-1444 (SSEKLQSIQLEIDTIREKYFF) and 1445-1468 (AIARSLKLQGAQMGWSMSRSIFDM).

The protein is Putative leucine-rich repeat-containing protein DDB_G0290503 of Dictyostelium discoideum (Social amoeba).